Reading from the N-terminus, the 774-residue chain is E3 ubiquitin-protein ligase RFWD3 (774 aa).

Ser-46 and Ser-63 each carry phosphoserine; by ATM and ATR. Disordered stretches follow at residues 95–116 (NPRTSEQHRQGSDGNHTIPASS), 139–225 (PSSS…AEYG), and 257–280 (GGKTLPKQPSPQKSEPLLPSASMD). The segment covering 106 to 116 (SDGNHTIPASS) has biased composition (polar residues). Positions 150–162 (RTRRRVSASRRAR) are enriched in basic residues. Positions 211–221 (SSSSDSDSDSS) are enriched in low complexity. An RING-type; degenerate zinc finger spans residues 287–331 (CTICLEQWTNAGDHRLSALRCGHLFGYRCISTWLKGQVRKCPQCN). Positions 361–413 (SLLKEQMLRKQAELESAQCRLQLQVLTDKCTRLQRRVQDLQKLTSHQSQNLQQ) form a coiled coil. WD repeat units follow at residues 495–537 (MHGK…QTYN), 539–577 (GRPVWSCCWCLDEANYIYAGLANGSILVYDVRNTSSHVQ), and 583–628 (KARC…SHWP).

Interacts with MDM2 and p53/TP53. Binds to the RPA complex via direct interaction with RPA2. Interacts with RAD51. In terms of processing, phosphorylated at Ser-46 and Ser-63 upon DNA damage by ATM or ATR. ATM phosphorylation occurs at early times upon DNA damage, while ATR is the major kinase at later times. Phosphorylation by ATM and ATR is required to stabilize p53/TP53. Part of the phosphorylation depends upon RPA2 presence.

Its subcellular location is the nucleus. It localises to the PML body. It is found in the cytoplasm. The catalysed reaction is S-ubiquitinyl-[E2 ubiquitin-conjugating enzyme]-L-cysteine + [acceptor protein]-L-lysine = [E2 ubiquitin-conjugating enzyme]-L-cysteine + N(6)-ubiquitinyl-[acceptor protein]-L-lysine.. It functions in the pathway protein modification; protein ubiquitination. E3 ubiquitin-protein ligase required for the repair of DNA interstrand cross-links (ICL) in response to DNA damage. Plays a key role in RPA-mediated DNA damage signaling and repair. Acts by mediating ubiquitination of the RPA complex (RPA1, RPA2 and RPA3 subunits) and RAD51 at stalled replication forks, leading to remove them from DNA damage sites and promote homologous recombination. Also mediates the ubiquitination of p53/TP53 in the late response to DNA damage, and acts as a positive regulator of p53/TP53 stability, thereby regulating the G1/S DNA damage checkpoint. May act by catalyzing the formation of short polyubiquitin chains on p53/TP53 that are not targeted to the proteasome. In response to ionizing radiation, interacts with MDM2 and enhances p53/TP53 ubiquitination, possibly by restricting MDM2 from extending polyubiquitin chains on ubiquitinated p53/TP53. Required to translesion DNA synthesis across DNA-protein cross-link adducts by catalyzing ubiquitination of proteins on single-stranded DNA (ssDNA). The chain is E3 ubiquitin-protein ligase RFWD3 from Homo sapiens (Human).